We begin with the raw amino-acid sequence, 78 residues long: Small ribosomal subunit protein bS16c (78 aa).

The protein belongs to the bacterial ribosomal protein bS16 family.

The protein localises to the plastid. Its subcellular location is the chloroplast. This is Small ribosomal subunit protein bS16c from Chara vulgaris (Common stonewort).